The following is a 382-amino-acid chain: uncharacterized protein (382 aa).

Transmembrane regions (helical) follow at residues 14–34 (GLLL…LWLA), 45–65 (VVSS…GYVI), 79–99 (FIFA…SWLA), 102–122 (FVAG…LMCS), 131–151 (LLAA…LLVS), 157–177 (LMSV…PLLF), 204–224 (LGVN…GLMP), 235–255 (ASIG…QWPI), 270–290 (VQVF…AMAP), 291–311 (ALFI…AWAC), 325–345 (ALLL…AMLM), and 348–368 (FSDN…LLML).

The protein belongs to the major facilitator superfamily. YcaD (TC 2.A.1.26) family.

The protein resides in the cell inner membrane. This is an uncharacterized protein from Escherichia coli O6:K15:H31 (strain 536 / UPEC).